The sequence spans 1164 residues: DNA-directed RNA polymerase (1164 aa).

This sequence belongs to the RNA polymerase beta chain family. As to quaternary structure, the DNA-dependent RNA polymerase used for intermediate and late genes expression consists of eight subunits 147 kDa, 133 kDa, 35 kDa, 30 kDa, 22 kDa, 19 kDa, 18 kDa and 7 kDa totalling more than 500 kDa in mass. The same holoenzyme, with the addition of the transcription-specificity factor RAP94, is used for early gene expression.

It is found in the virion. The catalysed reaction is RNA(n) + a ribonucleoside 5'-triphosphate = RNA(n+1) + diphosphate. Part of the DNA-dependent RNA polymerase which catalyzes the transcription of viral DNA into RNA using the four ribonucleoside triphosphates as substrates. Responsible for the transcription of early, intermediate and late genes. DNA-dependent RNA polymerase associates with the early transcription factor (ETF), itself composed of OPG118 and OPG133, thereby allowing the early genes transcription. Late transcription, and probably also intermediate transcription, require newly synthesized RNA polymerase. The protein is DNA-directed RNA polymerase (OPG151) of Monkeypox virus.